The chain runs to 239 residues: Ribonuclease PH (239 aa).

Residues R87 and 125–127 each bind phosphate; that span reads GTR.

This sequence belongs to the RNase PH family. As to quaternary structure, homohexameric ring arranged as a trimer of dimers.

The catalysed reaction is tRNA(n+1) + phosphate = tRNA(n) + a ribonucleoside 5'-diphosphate. Its function is as follows. Phosphorolytic 3'-5' exoribonuclease that plays an important role in tRNA 3'-end maturation. Removes nucleotide residues following the 3'-CCA terminus of tRNAs; can also add nucleotides to the ends of RNA molecules by using nucleoside diphosphates as substrates, but this may not be physiologically important. Probably plays a role in initiation of 16S rRNA degradation (leading to ribosome degradation) during starvation. This is Ribonuclease PH from Dehalococcoides mccartyi (strain ATCC BAA-2266 / KCTC 15142 / 195) (Dehalococcoides ethenogenes (strain 195)).